Here is a 598-residue protein sequence, read N- to C-terminus: Fibulin-1 (598 aa).

Intrachain disulfides connect Ala1/Cys25, Cys7/Cys26, Cys28/Cys52, Cys29/Cys59, Cys42/Cys60, Cys96/Cys106, Cys102/Cys115, Cys117/Cys130, Cys136/Cys149, Cys143/Cys158, Cys164/Cys176, Cys182/Cys195, Cys189/Cys204, Cys210/Cys222, Cys228/Cys242, Cys257/Cys270, Cys275/Cys288, Cys282/Cys297, Cys299/Cys312, Cys318/Cys330, Cys326/Cys339, Cys341/Cys354, Cys360/Cys369, Cys365/Cys378, Cys380/Cys394, Cys400/Cys413, Cys409/Cys422, Cys424/Cys438, Cys444/Cys457, Cys451/Cys466, and Cys471/Cys483. Anaphylatoxin-like domains follow at residues 1-27 and 28-60; these read ANEQDHCAAPRGDNASLEATFVKRCCH and CCLLGRAAQAQGQSCEYNLMVGYQCGQVFRACC. N-linked (GlcNAc...) asparagine glycosylation is present at Asn14. In terms of domain architecture, EGF-like 1 spans 92-131; sequence LNDRCRGGGPCKQQCRDTGDEVVCSCFVGYQLLSDGVSCE. Residues 132–177 form the EGF-like 2; calcium-binding domain; it reads DVNECITGSHSCRLGESCINTVGSFRCQRDSSCGTGYELTEDNSCK. One can recognise an EGF-like 3; calcium-binding domain in the interval 178–223; sequence DIDQCESGIHNCLPDFICQNTLGSFRCRPKLQCKNGFIQDALANCI. Residues 224-270 enclose the EGF-like 4; calcium-binding domain; that stretch reads DINECLSIVSAPCPTGHTCINTEGSYTQKNVPNCGRGYHLNEEGTRC. In terms of domain architecture, EGF-like 5; calcium-binding spans 271-313; it reads DVNECAPPAEPCGKGHRCVNSPGSFRCECKTGYYFDGISRMCV. The segment at 271–355 is self-association and FN1-binding; that stretch reads DVNECAPPAE…RLSVDGRSCE (85 aa). One can recognise an EGF-like 6; calcium-binding domain in the interval 314-355; the sequence is DVNECQRYPGRLCGHKCENTLGSYVCSCSVGFRLSVDGRSCE. Positions 356–395 constitute an EGF-like 7; calcium-binding domain; the sequence is DINECSSSPCSQECANVYGSYQCYCRRGYQLSDVDGVTCE. The region spanning 396–439 is the EGF-like 8; calcium-binding domain; the sequence is DIDECALPTGGHICSYRCINIPGSFQCSCPASGYRLAPNGRNCQ. The EGF-like 9; calcium-binding domain maps to 440–484; it reads DIDECVTGIHNCSINETCFNIQGGFRCLAFECPENYRRSAATRCE. Residues Asn450 and Asn454 are each glycosylated (N-linked (GlcNAc...) asparagine).

This sequence belongs to the fibulin family. As to quaternary structure, homomultimerizes and interacts with various extracellular matrix components. Interacts with FBLN7. Interacts with the mature/soluble form of DTR. Interacts with CCN3.

Its subcellular location is the secreted. The protein localises to the extracellular space. The protein resides in the extracellular matrix. Its function is as follows. Incorporated into fibronectin-containing matrix fibers. May play a role in cell adhesion and migration along protein fibers within the extracellular matrix (ECM). Could be important for certain developmental processes and contribute to the supramolecular organization of ECM architecture, in particular to those of basement membranes. May serve to anchor the mature/soluble form of DTR to its fibers as it migrates through the extracellular matrix. The direct physical association with DTR may be useful in such tissue developmental processes as wound healing. In Chlorocebus aethiops (Green monkey), this protein is Fibulin-1 (FBLN1).